Here is a 355-residue protein sequence, read N- to C-terminus: DNA polymerase IV (355 aa).

Residues 7 to 188 (IIHIDMDCFY…LPVRKLFGVG (182 aa)) enclose the UmuC domain. Mg(2+)-binding residues include D11 and D106. Residue E107 is part of the active site.

This sequence belongs to the DNA polymerase type-Y family. Monomer. Mg(2+) is required as a cofactor.

The protein resides in the cytoplasm. It catalyses the reaction DNA(n) + a 2'-deoxyribonucleoside 5'-triphosphate = DNA(n+1) + diphosphate. Its function is as follows. Poorly processive, error-prone DNA polymerase involved in untargeted mutagenesis. Copies undamaged DNA at stalled replication forks, which arise in vivo from mismatched or misaligned primer ends. These misaligned primers can be extended by PolIV. Exhibits no 3'-5' exonuclease (proofreading) activity. May be involved in translesional synthesis, in conjunction with the beta clamp from PolIII. The protein is DNA polymerase IV of Legionella pneumophila (strain Lens).